The chain runs to 621 residues: GPI-anchor transamidase component GPAA1 (621 aa).

The Cytoplasmic portion of the chain corresponds to 2-19 (GLLSDPVRRRALARLVLR). Residues 20–41 (LNAPLCVLSYVAGIAWFLALVF) traverse the membrane as a helical segment. Residues 42 to 370 (PPLTQRTYMS…LLPGLSRFVS (329 aa)) are Lumenal-facing. Residues tyrosine 49 and serine 51 each coordinate a 2-acyl-6-[6-phosphoethanolamine-alpha-D-mannosyl-(1-&gt;2)-6-phosphoethanolamine-alpha-D-mannosyl-(1-&gt;6)-2-phosphoethanolamine-alpha-D-mannosyl-(1-&gt;4)-alpha-D-glucosaminyl]-1-(1-radyl,2-acyl-sn-glycero-3-phospho)-1D-myo-inositol. Asparagine 203 carries N-linked (GlcNAc...) asparagine glycosylation. An intrachain disulfide couples cysteine 259 to cysteine 266. A 2-acyl-6-[6-phosphoethanolamine-alpha-D-mannosyl-(1-&gt;2)-6-phosphoethanolamine-alpha-D-mannosyl-(1-&gt;6)-2-phosphoethanolamine-alpha-D-mannosyl-(1-&gt;4)-alpha-D-glucosaminyl]-1-(1-radyl,2-acyl-sn-glycero-3-phospho)-1D-myo-inositol-binding residues include histidine 354, glutamine 355, and serine 356. Glutamine 355 lines the Mg(2+) pocket. The helical transmembrane segment at 371 to 393 (IGLYMPAVGFLLLVLGLKALELW) threads the bilayer. Topologically, residues 394 to 425 (MQLHEAGMGLEEPGGAPGPSVPLPPSQGVGLA) are cytoplasmic. The chain crosses the membrane as a helical span at residues 426-450 (SLVAPLLISQAMGLALYVLPVLGQH). Over 451-462 (VATQHFPVAEAE) the chain is Lumenal. A helical transmembrane segment spans residues 463–483 (AVVLTLLAIYAAGLALPHNTH). At 484–495 (RVVSTQAPDRGW) the chain is on the cytoplasmic side. A run of 2 helical transmembrane segments spans residues 496–519 (MALKLVALIYLALQLGCIALTNFS) and 520–536 (LGFLLATTMVPTAALAK). Residues 537–540 (PHGP) are Cytoplasmic-facing. A helical transmembrane segment spans residues 541–563 (RTLYAALLVLTSPAATLLGSLFL). Residues 564–597 (WRELQEAPLSLAEGWQLFLAALAQGVLEHHTYGA) are Lumenal-facing. A helical transmembrane segment spans residues 598-619 (LLFPLLSLGLYPCWLLFWNVLF). Residues 620 to 621 (WK) are Cytoplasmic-facing.

In terms of assembly, heteropentamer. Part of the GPI-anchor transamidase complex, consisting of PIGK, PIGT, PIGS, PIGU and GAA1. Interacts with PIGK. As to expression, ubiquitously expressed in fetal and adult tissues. Expressed at higher levels in fetal tissues than adult tissues.

The protein resides in the endoplasmic reticulum membrane. Its pathway is glycolipid biosynthesis; glycosylphosphatidylinositol-anchor biosynthesis. Component of the glycosylphosphatidylinositol-anchor (GPI-anchor) transamidase (GPI-T) complex that catalyzes the formation of the linkage between a proprotein and a GPI-anchor and participates in GPI anchored protein biosynthesis. Binds GPI-anchor. This chain is GPI-anchor transamidase component GPAA1, found in Homo sapiens (Human).